The primary structure comprises 918 residues: Probable lipoxygenase 6 (918 aa).

Residues 56-76 (AASPSSGIKGGGAGERRPAPE) form a disordered region. In terms of domain architecture, PLAT spans 90–218 (QKEDIKEAVA…ELPTKRVFFS (129 aa)). The region spanning 221-918 (PYLPSETPPG…CRGVPNSISI (698 aa)) is the Lipoxygenase domain. Residues His573, His578, His765, Asn769, and Ile918 each contribute to the Fe cation site.

This sequence belongs to the lipoxygenase family. It depends on Fe cation as a cofactor.

The catalysed reaction is (9Z,12Z)-octadecadienoate + O2 = (13S)-hydroperoxy-(9Z,11E)-octadecadienoate. It catalyses the reaction (9Z,12Z,15Z)-octadecatrienoate + O2 = (13S)-hydroperoxy-(9Z,11E,15Z)-octadecatrienoate. It functions in the pathway lipid metabolism; oxylipin biosynthesis. In terms of biological role, plant lipoxygenase may be involved in a number of diverse aspects of plant physiology including growth and development, pest resistance, and senescence or responses to wounding. Catalyzes the hydroperoxidation of lipids containing a cis,cis-1,4-pentadiene structure. This is Probable lipoxygenase 6 from Oryza sativa subsp. japonica (Rice).